We begin with the raw amino-acid sequence, 226 residues long: UPF0173 metal-dependent hydrolase Dgeo_0136 (226 aa).

Belongs to the UPF0173 family.

This Deinococcus geothermalis (strain DSM 11300 / CIP 105573 / AG-3a) protein is UPF0173 metal-dependent hydrolase Dgeo_0136.